The chain runs to 155 residues: Interleukin-2 (155 aa).

An N-terminal signal peptide occupies residues 1 to 20; sequence MYSMQLASCVALTLVLLVNS. Thr23 carries O-linked (GalNAc...) threonine glycosylation. Cys78 and Cys126 are joined by a disulfide.

This sequence belongs to the IL-2 family.

The protein resides in the secreted. Its function is as follows. Cytokine produced by activated CD4-positive helper T-cells and to a lesser extend activated CD8-positive T-cells and natural killer (NK) cells that plays pivotal roles in the immune response and tolerance. Binds to a receptor complex composed of either the high-affinity trimeric IL-2R (IL2RA/CD25, IL2RB/CD122 and IL2RG/CD132) or the low-affinity dimeric IL-2R (IL2RB and IL2RG). Interaction with the receptor leads to oligomerization and conformation changes in the IL-2R subunits resulting in downstream signaling starting with phosphorylation of JAK1 and JAK3. In turn, JAK1 and JAK3 phosphorylate the receptor to form a docking site leading to the phosphorylation of several substrates including STAT5. This process leads to activation of several pathways including STAT, phosphoinositide-3-kinase/PI3K and mitogen-activated protein kinase/MAPK pathways. Functions as a T-cell growth factor and can increase NK-cell cytolytic activity as well. Promotes strong proliferation of activated B-cells and subsequently immunoglobulin production. Plays a pivotal role in regulating the adaptive immune system by controlling the survival and proliferation of regulatory T-cells, which are required for the maintenance of immune tolerance. Moreover, participates in the differentiation and homeostasis of effector T-cell subsets, including Th1, Th2, Th17 as well as memory CD8-positive T-cells. The protein is Interleukin-2 (Il2) of Rattus norvegicus (Rat).